The sequence spans 466 residues: Delta-1 crystallin (466 aa).

It belongs to the lyase 1 family. Argininosuccinate lyase subfamily. As to quaternary structure, homotetramer. Eye lens.

Functionally, delta crystallin, the principal crystallin in embryonic lens, is found only in birds and reptiles. This is Delta-1 crystallin (ASL1) from Meleagris gallopavo (Wild turkey).